The chain runs to 778 residues: uncharacterized protein (778 aa).

A PE domain is found at 1–92; sequence MSFVIAVPEA…GARSYVVAEA (92 aa). Disordered regions lie at residues 125–163, 372–510, and 718–778; these read ADGT…AGLI, TGLA…GDAF, and QGGL…GADG. 3 stretches are compositionally biased toward gly residues: residues 402–429, 436–510, and 718–763; these read NQTG…GGLG, DGTG…GDAF, and QGGL…GSSG.

This sequence belongs to the mycobacterial PE family. PGRS subfamily.

This is an uncharacterized protein from Mycobacterium bovis (strain ATCC BAA-935 / AF2122/97).